A 243-amino-acid polypeptide reads, in one-letter code: Probable HTH-type transcriptional regulator GfsR (243 aa).

Positions 154–179 (AAVARPDTSGSATGRTGDSSPSLALS) are disordered. A compositionally biased stretch (polar residues) spans 161-178 (TSGSATGRTGDSSPSLAL). The 66-residue stretch at 171 to 236 (DSSPSLALSP…QALLRWLGHP (66 aa)) folds into the HTH luxR-type domain. Positions 195 to 214 (VREIAVEMRLAEKTVRNYLS) form a DNA-binding region, H-T-H motif.

It functions in the pathway antibiotic biosynthesis. Its function is as follows. Probable DNA-binding protein that contributes to the control of expression of the biosynthesis operon of the 16-membered macrolide antibiotics FD-891 and FD-892. Might be a member of a two-component regulatory system; the putative sensor kinase gene is unknown. This is Probable HTH-type transcriptional regulator GfsR from Streptomyces halstedii.